The primary structure comprises 352 residues: Quinolinate synthase (352 aa).

Residues H48 and S69 each coordinate iminosuccinate. C114 is a [4Fe-4S] cluster binding site. Residues 140–142 (YAN) and S157 each bind iminosuccinate. C201 contacts [4Fe-4S] cluster. Iminosuccinate contacts are provided by residues 227-229 (HPE) and T244. C298 serves as a coordination point for [4Fe-4S] cluster.

Belongs to the quinolinate synthase family. Type 1 subfamily. [4Fe-4S] cluster is required as a cofactor.

It localises to the cytoplasm. It carries out the reaction iminosuccinate + dihydroxyacetone phosphate = quinolinate + phosphate + 2 H2O + H(+). It participates in cofactor biosynthesis; NAD(+) biosynthesis; quinolinate from iminoaspartate: step 1/1. Its function is as follows. Catalyzes the condensation of iminoaspartate with dihydroxyacetone phosphate to form quinolinate. This is Quinolinate synthase from Pseudomonas putida (strain GB-1).